The sequence spans 5900 residues: Midasin (5900 aa).

The tract at residues 250-270 (GSSVKSKKGGEQQQEGEGEDE) is disordered. 6 AAA-ATPase protomer regions span residues 278-583 (TNTV…LRKQ), 673-1012 (EKIS…ALNY), 1101-1346 (PIIP…IAGY), 1411-1721 (IVWT…MDKQ), 1840-2089 (RGMQ…HVLT), and 2167-2451 (LENI…EIYM). Residues 302–309 (GVTGSGKT) and 689–696 (GETGTGKT) each bind ATP. The disordered stretch occupies residues 796 to 826 (QTTTNNTKENNNNNNNNNNNNNNNNNNKKRT). The segment covering 797–821 (TTTNNTKENNNNNNNNNNNNNNNNN) has biased composition (low complexity). Residues 1135–1142 (GPTSSGKT), 1438–1445 (GETGCSKT), 1852–1859 (GSPGVGKT), and 2184–2191 (GPTSTSKT) each bind ATP. The linker stretch occupies residues 2562-4965 (ESAIKSILCE…EGKGKKDVSD (2404 aa)). The interval 4932–5598 (GDDGEGGEGG…SVEEKKLTRE (667 aa)) is disordered. Over residues 4984–5008 (KDEDEDEEKEEKDEDEGFDMQDDFE) the composition is skewed to acidic residues. The segment covering 5009–5055 (GEMHDIKKDENKDEDKKDDPNNEKENDKEMGDLEKPEDNVVDEKLWD) has biased composition (basic and acidic residues). Residues 5056 to 5076 (EQDVQDEEEQDEEGKGDETNS) are compositionally biased toward acidic residues. The segment covering 5079–5113 (MMAKQDGKDDNDDDKKDDDKKDDKKKKKEENGKPD) has biased composition (basic and acidic residues). Acidic residues-rich tracts occupy residues 5114-5130 (ENEE…EDGK) and 5139-5156 (GASD…DDVI). Basic and acidic residues predominate over residues 5159-5173 (EQEKEENHGDPRGDD). Over residues 5174 to 5199 (QMEIPEDLELEDPDEGKEDDEQQDGG) the composition is skewed to acidic residues. Over residues 5213–5224 (DVSKEEEKKKEL) the composition is skewed to basic and acidic residues. 2 stretches are compositionally biased toward acidic residues: residues 5225–5255 (DGDE…EDKE) and 5273–5286 (EGDE…EEDQ). Over residues 5297-5313 (ETPKDSEQPLGVKDKTG) the composition is skewed to basic and acidic residues. Residues 5339–5349 (GMTQPTPSEND) are compositionally biased toward polar residues. Basic and acidic residues predominate over residues 5410 to 5442 (SEPKEKAPKQDPNAKENENQDYEFIKDDEKLDK). A compositionally biased stretch (low complexity) spans 5448–5460 (QALAAATDTQLQD). Residues 5469 to 5487 (DQAEQEEDQMDIDEEDDMD) show a composition bias toward acidic residues. Composition is skewed to basic and acidic residues over residues 5488 to 5536 (VDHK…KDQQ) and 5551 to 5570 (QFTK…KAVL). The span at 5571–5590 (DDGDDQEMEQDGDQDDEESV) shows a compositional bias: acidic residues. One can recognise a VWFA domain in the interval 5696–5889 (QVLLAIDDTE…NIPSILSDTL (194 aa)).

It belongs to the midasin family. Associates with pre-60S ribosomes in the nucleoplasm.

It localises to the nucleus. The protein resides in the nucleolus. The protein localises to the nucleoplasm. Nuclear chaperone required for maturation and nuclear export of pre-60S ribosome subunits. Functions at successive maturation steps to remove ribosomal factors at critical transition points, first driving the exit of early pre-60S particles from the nucleolus and then driving late pre-60S particles from the nucleus. In Dictyostelium discoideum (Social amoeba), this protein is Midasin (mdn1).